Consider the following 567-residue polypeptide: Myo-inositol transporter 1 (567 aa).

The Cytoplasmic portion of the chain corresponds to 1–88; sequence MSARPAQPNI…KFVWMLVSAA (88 aa). Positions 14–42 are disordered; the sequence is IRTSLSGYPSPTHSGSSTPASLEFSDGRL. The segment covering 16–33 has biased composition (polar residues); the sequence is TSLSGYPSPTHSGSSTPA. The chain crosses the membrane as a helical span at residues 89-109; the sequence is AISGLLFGYDTAAISGMLVII. The Extracellular segment spans residues 110–123; that stretch reads KDDLGTILSSWQKE. A helical transmembrane segment spans residues 124–144; sequence VITSATTLGALLGGLAAGCVS. Over 145-150 the chain is Cytoplasmic; the sequence is DFTGRR. Residues 151-171 traverse the membrane as a helical segment; sequence LVIVFANVAFIGGSICQAACH. At 172–180 the chain is on the extracellular side; the sequence is TVAAMIAGR. Residues 181–201 form a helical membrane-spanning segment; the sequence is FIVGLGVGLASCIVPLYIGEL. Residues 202 to 209 lie on the Cytoplasmic side of the membrane; the sequence is APTMIRGR. A helical membrane pass occupies residues 210–230; sequence LVTINCVAVTLGQVVAYAIGA. Over 231 to 240 the chain is Extracellular; it reads SFQNVHNGWR. The chain crosses the membrane as a helical span at residues 241-261; the sequence is WIVGLGAMPSFVQLAAIGFLP. The Cytoplasmic segment spans residues 262–343; sequence ESPRILLLRS…IGCGLQAAQQ (82 aa). A helical transmembrane segment spans residues 344 to 364; the sequence is LCGFNTLMYYSATIFAMLGFN. Asn-365 carries an N-linked (GlcNAc...) asparagine glycan. The Extracellular portion of the chain corresponds to 365–367; that stretch reads NAT. Residues 368–388 traverse the membrane as a helical segment; it reads AVGLIVATVNVLFTLVALKIV. Topologically, residues 389–397 are cytoplasmic; it reads DPVGRRRTM. Residues 398–418 traverse the membrane as a helical segment; that stretch reads LFTLPIMILALVFAAIFFYYL. Residues 419–435 lie on the Extracellular side of the membrane; sequence TLSTNGILIEDHDYPRS. A helical transmembrane segment spans residues 436–456; the sequence is LSILVLLSMLLYVAGYATGLG. At 457–476 the chain is on the cytoplasmic side; it reads NIPWQQGELFRLEVRGIGTS. The chain crosses the membrane as a helical span at residues 477-497; it reads ICTAVNWSCNMLIAGTFLSLM. Over 498–503 the chain is Extracellular; sequence DAATPS. The chain crosses the membrane as a helical span at residues 504–524; sequence GAFGIYAGFCVIGWVFCWMLY. Topologically, residues 525–567 are cytoplasmic; that stretch reads PETSGLSLEEVYFVFEEGFGIKKSQQLRKQKLVEAAKLKAIFE.

The protein belongs to the major facilitator superfamily. Sugar transporter (TC 2.A.1.1) family.

The protein resides in the cell membrane. The catalysed reaction is myo-inositol(out) + H(+)(out) = myo-inositol(in) + H(+)(in). In terms of biological role, may function as a transporter or as a sensor for myo-inositol. The protein is Myo-inositol transporter 1 of Cryptococcus neoformans var. grubii serotype A (strain H99 / ATCC 208821 / CBS 10515 / FGSC 9487) (Filobasidiella neoformans var. grubii).